A 94-amino-acid chain; its full sequence is Small ribosomal subunit protein uS19 (94 aa).

It belongs to the universal ribosomal protein uS19 family.

In terms of biological role, protein S19 forms a complex with S13 that binds strongly to the 16S ribosomal RNA. This Acidobacterium capsulatum (strain ATCC 51196 / DSM 11244 / BCRC 80197 / JCM 7670 / NBRC 15755 / NCIMB 13165 / 161) protein is Small ribosomal subunit protein uS19.